Reading from the N-terminus, the 273-residue chain is uncharacterized protein (273 aa).

The N-terminal stretch at M1 to A21 is a signal peptide.

The protein to S.typhimurium YadU.

Part of the yfcOPQRSUV fimbrial operon. Could contribute to adhesion to various surfaces in specific environmental niches. Increases adhesion to eukaryotic T24 bladder epithelial cells in the absence of fim genes. This is an uncharacterized protein from Escherichia coli (strain K12).